The chain runs to 227 residues: Ribosomal RNA large subunit methyltransferase E (227 aa).

Residues Gly78, Trp80, Asp103, Asp119, and Asp143 each coordinate S-adenosyl-L-methionine. Residue Lys183 is the Proton acceptor of the active site.

The protein belongs to the class I-like SAM-binding methyltransferase superfamily. RNA methyltransferase RlmE family.

The protein resides in the cytoplasm. The enzyme catalyses uridine(2552) in 23S rRNA + S-adenosyl-L-methionine = 2'-O-methyluridine(2552) in 23S rRNA + S-adenosyl-L-homocysteine + H(+). In terms of biological role, specifically methylates the uridine in position 2552 of 23S rRNA at the 2'-O position of the ribose in the fully assembled 50S ribosomal subunit. The sequence is that of Ribosomal RNA large subunit methyltransferase E from Rickettsia conorii (strain ATCC VR-613 / Malish 7).